We begin with the raw amino-acid sequence, 1199 residues long: Major DNA-binding protein (1199 aa).

Positions 289–314 are disordered; sequence SGTTTARGARRNDVNSTSKPSPSGGF. The segment at 497 to 510 is a zinc-finger region; the sequence is CSLCEKHTRPVCAH. Short sequence motifs (required for filament formation) lie at residues 841–842 and 1146–1148; these read FW and FNF. The interval 1172–1199 is required for nuclear localization; it reads LKRPPEDDELFDLSGIPIKHGNITMEMI.

It belongs to the herpesviridae major DNA-binding protein family. As to quaternary structure, homooligomers. Forms double-helical filaments necessary for the formation of replication compartments within the host nucleus. Interacts with the origin-binding protein. Interacts with the helicase primase complex; this interaction stimulates primer synthesis activity of the helicase-primase complex. Interacts with the DNA polymerase. Interacts with the alkaline exonuclease; this interaction increases its nuclease processivity.

The protein localises to the host nucleus. Its function is as follows. Plays several crucial roles in viral infection. Participates in the opening of the viral DNA origin to initiate replication by interacting with the origin-binding protein. May disrupt loops, hairpins and other secondary structures present on ssDNA to reduce and eliminate pausing of viral DNA polymerase at specific sites during elongation. Promotes viral DNA recombination by performing strand-transfer, characterized by the ability to transfer a DNA strand from a linear duplex to a complementary single-stranded DNA circle. Can also catalyze the renaturation of complementary single strands. Additionally, reorganizes the host cell nucleus, leading to the formation of prereplicative sites and replication compartments. This process is driven by the protein which can form double-helical filaments in the absence of DNA. The sequence is that of Major DNA-binding protein from Varicella-zoster virus (strain Oka vaccine) (HHV-3).